Consider the following 593-residue polypeptide: SPI-1 type 3 secretion system translocon protein SctE (593 aa).

Coiled coils occupy residues 151–208 (DTAK…ATDA) and 287–314 (EGRQ…NRIM). The next 2 helical transmembrane spans lie at 330–350 (VVAA…GLAV) and 409–429 (IVGA…VAVV).

It belongs to the SctE/SipB/YopB family. As to quaternary structure, the core secretion machinery of the T3SS is composed of approximately 20 different proteins, including cytoplasmic components, a base, an export apparatus and a needle. This subunit is involved in the formation of a pore, called the translocon, in host membrane.

It localises to the secreted. Its subcellular location is the host membrane. Component of the type III secretion system 1 (SPI-1 T3SS), also called injectisome, which is used to inject bacterial effector proteins into eukaryotic host cells. SipB/SctE1 and SipC/SctB are inserted into the host membrane where they form a pore and allow the translocation of effector proteins into the cytosol of target cells. The polypeptide is SPI-1 type 3 secretion system translocon protein SctE (Salmonella dublin).